A 153-amino-acid chain; its full sequence is MISQSTLFLFILLIIGLIAKNQSLTVAIGVLFLLKFTFLGDKVFPYLQTKGINLGVTVITIAVLVPIATGEIGFKQLGEAAKSYYAWIALASGVAVALLAKGGVQLLTTDPHITTALVFGTVIAVALFNGVAVGPLIGAGIAYAVMSIIQMFK.

4 helical membrane-spanning segments follow: residues Phe8 to Ile28, Leu54 to Phe74, Trp87 to Leu107, and Leu117 to Ile137.

The protein belongs to the UPF0756 family.

It localises to the cell membrane. The sequence is that of UPF0756 membrane protein BCB4264_A4705 from Bacillus cereus (strain B4264).